Consider the following 200-residue polypeptide: Small ribosomal subunit protein uS4 (200 aa).

The interval threonine 22–lysine 42 is disordered. Residues alanine 92–lysine 152 enclose the S4 RNA-binding domain.

This sequence belongs to the universal ribosomal protein uS4 family. Part of the 30S ribosomal subunit. Contacts protein S5. The interaction surface between S4 and S5 is involved in control of translational fidelity.

Its function is as follows. One of the primary rRNA binding proteins, it binds directly to 16S rRNA where it nucleates assembly of the body of the 30S subunit. Functionally, with S5 and S12 plays an important role in translational accuracy. In Bacillus mycoides (strain KBAB4) (Bacillus weihenstephanensis), this protein is Small ribosomal subunit protein uS4.